The primary structure comprises 357 residues: Probable cinnamyl alcohol dehydrogenase 7/8 (357 aa).

C47 provides a ligand contact to Zn(2+). Position 49 (S49) interacts with NADP(+). Zn(2+) contacts are provided by H69, E70, C100, C103, C106, C114, and C163. NADP(+) is bound by residues T167, 188-193 (GLGGVG), 211-216 (SSSDKK), T251, G275, and 298-300 (SFI).

The protein belongs to the zinc-containing alcohol dehydrogenase family. In terms of assembly, homodimer. Zn(2+) serves as cofactor.

It carries out the reaction (E)-cinnamyl alcohol + NADP(+) = (E)-cinnamaldehyde + NADPH + H(+). The catalysed reaction is (E)-coniferol + NADP(+) = (E)-coniferaldehyde + NADPH + H(+). It catalyses the reaction (E)-sinapyl alcohol + NADP(+) = (E)-sinapaldehyde + NADPH + H(+). The enzyme catalyses (E)-4-coumaroyl alcohol + NADP(+) = (E)-4-coumaraldehyde + NADPH + H(+). It carries out the reaction (E)-caffeyl alcohol + NADP(+) = (E)-caffeyl aldehyde + NADPH + H(+). It functions in the pathway aromatic compound metabolism; phenylpropanoid biosynthesis. Functionally, involved in lignin biosynthesis. Catalyzes the final step specific for the production of lignin monomers. Catalyzes the NADPH-dependent reduction of coniferaldehyde, 5-hydroxyconiferaldehyde, sinapaldehyde, 4-coumaraldehyde and caffeyl aldehyde to their respective alcohols. In Picea abies (Norway spruce), this protein is Probable cinnamyl alcohol dehydrogenase 7/8 (CAD7).